A 678-amino-acid chain; its full sequence is DNA ligase (678 aa).

Residues 47–51 (DSDYD), 96–97 (SL), and E122 each bind NAD(+). K124 serves as the catalytic N6-AMP-lysine intermediate. 4 residues coordinate NAD(+): R145, E182, K300, and K324. Zn(2+)-binding residues include C418, C421, C436, and C442. Residues 602–678 (AYNESFTGKT…ILEDNLKDLL (77 aa)) enclose the BRCT domain.

This sequence belongs to the NAD-dependent DNA ligase family. LigA subfamily. Mg(2+) serves as cofactor. Requires Mn(2+) as cofactor.

The enzyme catalyses NAD(+) + (deoxyribonucleotide)n-3'-hydroxyl + 5'-phospho-(deoxyribonucleotide)m = (deoxyribonucleotide)n+m + AMP + beta-nicotinamide D-nucleotide.. Functionally, DNA ligase that catalyzes the formation of phosphodiester linkages between 5'-phosphoryl and 3'-hydroxyl groups in double-stranded DNA using NAD as a coenzyme and as the energy source for the reaction. It is essential for DNA replication and repair of damaged DNA. In Francisella tularensis subsp. novicida (strain U112), this protein is DNA ligase.